Consider the following 568-residue polypeptide: Small ribosomal subunit protein bS1 (568 aa).

6 S1 motif domains span residues 27 to 93 (GYVA…LSRE), 111 to 177 (GERV…VSRR), 198 to 266 (GQVV…LGMK), 283 to 353 (GKKI…LGLK), 370 to 440 (GTEV…LGIK), and 459 to 530 (NAVV…LSIK).

The protein belongs to the bacterial ribosomal protein bS1 family.

Its function is as follows. Binds mRNA; thus facilitating recognition of the initiation point. It is needed to translate mRNA with a short Shine-Dalgarno (SD) purine-rich sequence. The protein is Small ribosomal subunit protein bS1 (rpsA) of Rhizobium meliloti (strain 1021) (Ensifer meliloti).